The chain runs to 429 residues: Tryptophan synthase beta chain 2 (429 aa).

Lys111 is subject to N6-(pyridoxal phosphate)lysine.

It belongs to the TrpB family. Tetramer of two alpha and two beta chains. Pyridoxal 5'-phosphate serves as cofactor.

It catalyses the reaction (1S,2R)-1-C-(indol-3-yl)glycerol 3-phosphate + L-serine = D-glyceraldehyde 3-phosphate + L-tryptophan + H2O. Its pathway is amino-acid biosynthesis; L-tryptophan biosynthesis; L-tryptophan from chorismate: step 5/5. In terms of biological role, the beta subunit is responsible for the synthesis of L-tryptophan from indole and L-serine. The protein is Tryptophan synthase beta chain 2 (trpB2) of Saccharolobus solfataricus (strain ATCC 35092 / DSM 1617 / JCM 11322 / P2) (Sulfolobus solfataricus).